The sequence spans 20 residues: Short cationic peptide-6a (20 aa).

Serine amide is present on Ser-20.

Expressed by the venom gland.

The protein resides in the secreted. The polypeptide is Short cationic peptide-6a (Cupiennius salei (American wandering spider)).